The chain runs to 567 residues: Dihydrolipoyl dehydrogenase 2, chloroplastic (567 aa).

The N-terminal 67 residues, 1 to 67, are a transit peptide targeting the chloroplast; that stretch reads MQSVLSLSFS…HIQSRRIEVS (67 aa). FAD is bound by residues 114–122, K131, G197, and 221–223; these read EGDVVGGTC and TGS. C122 and C127 are oxidised to a cystine. Residues 258-265, E281, and G354 each bind NAD(+); that span reads GSGYIGLE. FAD-binding positions include D400 and 406 to 409; that span reads MLAH. The Proton acceptor role is filled by H536.

The protein belongs to the class-I pyridine nucleotide-disulfide oxidoreductase family. Homodimer. Part of the plastidial pyruvate dehydrogenase complex (PDC) containing multiple copies of three enzymatic components: pyruvate dehydrogenase (E1), dihydrolipoamide acetyltransferase (E2) and lipoamide dehydrogenase (E3). FAD is required as a cofactor. Expressed mainly in flower buds and immature siliques, and to a lesser extent in flowers.

The protein resides in the plastid. Its subcellular location is the chloroplast stroma. It catalyses the reaction N(6)-[(R)-dihydrolipoyl]-L-lysyl-[protein] + NAD(+) = N(6)-[(R)-lipoyl]-L-lysyl-[protein] + NADH + H(+). Its function is as follows. Lipoamide dehydrogenase is a component of the plastidial pyruvate dehydrogenase complex (PDC). The chain is Dihydrolipoyl dehydrogenase 2, chloroplastic (LPD2) from Arabidopsis thaliana (Mouse-ear cress).